Consider the following 449-residue polypeptide: RNA binding protein fox-1 homolog 2 (449 aa).

Low complexity predominate over residues 1-21 (MAEGGQAQQQPPQLGPGAAAR). The interval 1–186 (MAEGGQAQQQ…STPKRLHVSN (186 aa)) is disordered. Polar residues-rich tracts occupy residues 77 to 86 (QGNQEPTTTP) and 118 to 138 (YAGQTSEHNLTLYGSTQPHGE). Over residues 139 to 176 (QSSNSPSNQNGSLTQTEGGAQTDGQQSQTQSSENSESK) the composition is skewed to low complexity. The region spanning 180–256 (KRLHVSNIPF…RKIEVNNATA (77 aa)) is the RRM domain. An omega-N-methylarginine mark is found at Arg236, Gly241, Tyr268, and Lys273. Glu285 and Pro317 each carry asymmetric dimethylarginine. Residues Leu318, Leu323, Ala336, Arg340, and Gly341 each carry the omega-N-methylarginine modification. Asymmetric dimethylarginine is present on residues Arg356 and Arg388. Asymmetric dimethylarginine; alternate occurs at positions 440 and 445. An omega-N-methylarginine; alternate mark is found at Arg440 and Arg445.

In terms of assembly, interacts with ER-alpha N-terminal activation domain. Interacts with RBPMS; the interaction allows cooperative assembly of stable cell-specific alternative splicing regulatory complexes. In terms of tissue distribution, detected in brain neurons (at protein level). Detected in heart, brain, embryo, lung, liver, kidney and ovary.

It is found in the nucleus. It localises to the cytoplasm. Functionally, RNA-binding protein that regulates alternative splicing events by binding to 5'-UGCAUGU-3' elements. Prevents binding of U2AF2 to the 3'-splice site. Regulates alternative splicing of tissue-specific exons and of differentially spliced exons during erythropoiesis. Seems to act as a coregulatory factor of ER-alpha. Together with RNA binding proteins RBPMS and MBNL1/2, activates vascular smooth muscle cells alternative splicing events. The sequence is that of RNA binding protein fox-1 homolog 2 (Rbfox2) from Mus musculus (Mouse).